We begin with the raw amino-acid sequence, 544 residues long: CTP synthase (544 aa).

The amidoligase domain stretch occupies residues 1–267 (MAKFVFVTGG…CRQVLDVLSL (267 aa)). Residue serine 13 coordinates CTP. A UTP-binding site is contributed by serine 13. Residues 14–19 (SIGKGI) and aspartate 71 each bind ATP. Mg(2+)-binding residues include aspartate 71 and glutamate 141. CTP is bound by residues 148–150 (DIE), 188–193 (KTKPTQ), and lysine 224. UTP contacts are provided by residues 188-193 (KTKPTQ) and lysine 224. Residues 292–534 (KVALVGKYVQ…IQAASQRLPQ (243 aa)) enclose the Glutamine amidotransferase type-1 domain. Glycine 354 contacts L-glutamine. Cysteine 381 acts as the Nucleophile; for glutamine hydrolysis in catalysis. L-glutamine-binding positions include 382 to 385 (LGMQ), glutamate 405, and arginine 462. Active-site residues include histidine 507 and glutamate 509.

It belongs to the CTP synthase family. As to quaternary structure, homotetramer.

It carries out the reaction UTP + L-glutamine + ATP + H2O = CTP + L-glutamate + ADP + phosphate + 2 H(+). The enzyme catalyses L-glutamine + H2O = L-glutamate + NH4(+). It catalyses the reaction UTP + NH4(+) + ATP = CTP + ADP + phosphate + 2 H(+). It participates in pyrimidine metabolism; CTP biosynthesis via de novo pathway; CTP from UDP: step 2/2. With respect to regulation, allosterically activated by GTP, when glutamine is the substrate; GTP has no effect on the reaction when ammonia is the substrate. The allosteric effector GTP functions by stabilizing the protein conformation that binds the tetrahedral intermediate(s) formed during glutamine hydrolysis. Inhibited by the product CTP, via allosteric rather than competitive inhibition. Its function is as follows. Catalyzes the ATP-dependent amination of UTP to CTP with either L-glutamine or ammonia as the source of nitrogen. Regulates intracellular CTP levels through interactions with the four ribonucleotide triphosphates. The protein is CTP synthase of Synechococcus sp. (strain RCC307).